The primary structure comprises 150 residues: Large ribosomal subunit protein bL9 (150 aa).

Belongs to the bacterial ribosomal protein bL9 family.

Binds to the 23S rRNA. The polypeptide is Large ribosomal subunit protein bL9 (Corynebacterium jeikeium (strain K411)).